The sequence spans 93 residues: UPF0358 protein BBR47_22520 (93 aa).

It belongs to the UPF0358 family.

This is UPF0358 protein BBR47_22520 from Brevibacillus brevis (strain 47 / JCM 6285 / NBRC 100599).